We begin with the raw amino-acid sequence, 599 residues long: MKKSQKRISNVSEIKAQLKTVETKVHNGVFLFSGIMTIAELAQKINVSVNQIITYFFHQAKMYNLNHSLSEDEIAEICLEFGLDFKKEVQIDASNFMEEVSILDQDKDLSPRPPIITVMGHVDHGKTTLLDYIRKTNIAKNEKGGITQHTGAYQVVFQGHIINFIDTPGHEAFTQMRARGAKVTDIIVLVVAADDGVMPQTKEAINHAAAANVPIIVFVNKMDKPNKDVDRIKNELSALNIVTEEWGGSNIFVYGSALTGQGIDTLFSSILLLAEILELKANKNRYPIGTVIEAKLHHNKGTIATLMVQNGTLMVRDFIVAGYQYGRIRSLENTNGQPIKFAPPGTPVIVTGLNYVPEAGDKFFGFHEEKFAKQLALEKKQSEKISKTKVQTKQQTKEKTLNIIVKADVAGIAQALHSTIEKLASKQVHIHILHSGVGIVNKADILLAQTSNSIIYAFNLQIPAAIKAQAKQAQVEIREHTIIYKIVDEIKKQVRGMREIRYELQQIGTAKIIAKFWFSKVGSIAGCSVLSGKFVENCKIELWRNSKLIHSGKIESLQRDKNPVKEVQVGNEFGTHIYKFNDIEIGDELKAFLDVEIEE.

The 168-residue stretch at 111 to 278 (PRPPIITVMG…SILLLAEILE (168 aa)) folds into the tr-type G domain. The tract at residues 120–127 (GHVDHGKT) is G1. 120 to 127 (GHVDHGKT) contacts GTP. The G2 stretch occupies residues 145–149 (GITQH). Positions 166–169 (DTPG) are G3. GTP-binding positions include 166–170 (DTPGH) and 220–223 (NKMD). A G4 region spans residues 220-223 (NKMD). The interval 256-258 (SAL) is G5.

The protein belongs to the TRAFAC class translation factor GTPase superfamily. Classic translation factor GTPase family. IF-2 subfamily.

It is found in the cytoplasm. Functionally, one of the essential components for the initiation of protein synthesis. Protects formylmethionyl-tRNA from spontaneous hydrolysis and promotes its binding to the 30S ribosomal subunits. Also involved in the hydrolysis of GTP during the formation of the 70S ribosomal complex. The chain is Translation initiation factor IF-2 from Mesomycoplasma hyopneumoniae (strain 7448) (Mycoplasma hyopneumoniae).